The following is a 59-amino-acid chain: Large ribosomal subunit protein uL30 (59 aa).

Belongs to the universal ribosomal protein uL30 family. As to quaternary structure, part of the 50S ribosomal subunit.

In Aeromonas hydrophila subsp. hydrophila (strain ATCC 7966 / DSM 30187 / BCRC 13018 / CCUG 14551 / JCM 1027 / KCTC 2358 / NCIMB 9240 / NCTC 8049), this protein is Large ribosomal subunit protein uL30.